The following is a 45-amino-acid chain: Large ribosomal subunit protein bL34 (45 aa).

The protein belongs to the bacterial ribosomal protein bL34 family.

In Corynebacterium urealyticum (strain ATCC 43042 / DSM 7109), this protein is Large ribosomal subunit protein bL34.